The following is a 312-amino-acid chain: Taste receptor type 2 member 7 (312 aa).

The Extracellular segment spans residues 1-9 (MTYETDTTL). A helical transmembrane segment spans residues 10–30 (MFVAVCEALVGILGNAFIALV). At 31–49 (NFMGWMKNRKITAIDLILS) the chain is on the cytoplasmic side. A helical transmembrane segment spans residues 50-70 (SLAMSRICLQCIILLDCIILV). At 71-101 (QYPDTYNRGKEMRIIDFFWTLTNHLSVWFAT) the chain is on the extracellular side. A helical transmembrane segment spans residues 102-122 (CLSIFYFFKIANFFHPLFLWI). Residues 123-128 (KWRIDK) are Cytoplasmic-facing. The helical transmembrane segment at 129 to 149 (LILRTLLACLILSLCFSLPVT) threads the bilayer. Over 150–187 (ENLTDDFRRCVKTKERINSTLRCKLNKAGYASVKVNLN) the chain is Extracellular. N-linked (GlcNAc...) asparagine glycans are attached at residues Asn151 and Asn167. A helical membrane pass occupies residues 188-208 (LVMLFPFSVSLVSFLLLILSL). The Cytoplasmic portion of the chain corresponds to 209-235 (WRHTRQMQLNVTGYNDPSTTAHVKATK). The chain crosses the membrane as a helical span at residues 236 to 256 (AVISFLVLFIVYCLAFLIATS). The Extracellular segment spans residues 257–266 (SYFMPESELA). A helical membrane pass occupies residues 267-287 (VIWGELIALIYPSSHSFILIL). Residues 288–312 (GNSKLKQASVRVLCRVKTMLKGRKY) lie on the Cytoplasmic side of the membrane.

This sequence belongs to the G-protein coupled receptor T2R family. Expressed in subsets of taste receptor cells of the tongue and palate epithelium and exclusively in gustducin-positive cells. Expressed in 15% taste bud cells in circumvallate and foliate papillae but only in 2% in fungiform papillae. Expressed in the duodenum, antrum and fundus (part of the stomach) and in gastric endocrine cells.

The protein resides in the membrane. Functionally, gustducin-coupled receptor implicated in the perception of bitter compounds in the oral cavity and the gastrointestinal tract. Signals through PLCB2 and the calcium-regulated cation channel TRPM5. The chain is Taste receptor type 2 member 7 (Tas2r7) from Rattus norvegicus (Rat).